The chain runs to 314 residues: Fibrinogen-like protein 1 (314 aa).

An N-terminal signal peptide occupies residues 1 to 22 (MGEIRSFLLVTIALMMGREIWA). The stretch at 25 to 59 (NSKCLLEQERLRAQVQQLETRVKQQQARIAQLMHE) forms a coiled coil. The region spanning 76 to 308 (LGGKRQYADC…SVVMKIRPND (233 aa)) is the Fibrinogen C-terminal domain. Intrachain disulfides connect Cys85/Cys114 and Cys250/Cys263.

Homodimer. Interacts (via the Fibrinogen C-terminal domain) with LAG3 (via Ig-like domains 1 and 2).

The protein localises to the secreted. Functionally, immune suppressive molecule that inhibits antigen-specific T-cell activation by acting as a major ligand of LAG3. Responsible for LAG3 T-cell inhibitory function. Binds LAG3 independently from MHC class II (MHC-II). Secreted by, and promotes growth of, hepatocytes. This Mesocricetus auratus (Golden hamster) protein is Fibrinogen-like protein 1.